We begin with the raw amino-acid sequence, 422 residues long: Phosphoribosylamine--glycine ligase (422 aa).

Positions 107 to 312 (KDVMAAAGVR…LGQLLHAAAT (206 aa)) constitute an ATP-grasp domain. Residue 137-193 (GPPAGDPAWVVKDDRLAAGKGVVVTADRDVARAHGAALLEAGHPVLLESYLDGPEVS) participates in ATP binding. Residues Glu-282 and Asn-284 each contribute to the Mg(2+) site.

It belongs to the GARS family. Mg(2+) serves as cofactor. The cofactor is Mn(2+).

It carries out the reaction 5-phospho-beta-D-ribosylamine + glycine + ATP = N(1)-(5-phospho-beta-D-ribosyl)glycinamide + ADP + phosphate + H(+). It functions in the pathway purine metabolism; IMP biosynthesis via de novo pathway; N(1)-(5-phospho-D-ribosyl)glycinamide from 5-phospho-alpha-D-ribose 1-diphosphate: step 2/2. The polypeptide is Phosphoribosylamine--glycine ligase (Mycobacterium bovis (strain ATCC BAA-935 / AF2122/97)).